A 259-amino-acid chain; its full sequence is Methyltransferase afvD (259 aa).

This sequence belongs to the class I-like SAM-binding methyltransferase superfamily.

It functions in the pathway secondary metabolite biosynthesis. Its function is as follows. Methyltransferase; part of the gene cluster that mediates the biosynthesis of aflavarin, a bicoumarin that exhibits anti-insectan activity against the fungivorous beetle C.hemipterus. In Aspergillus flavus (strain ATCC 200026 / FGSC A1120 / IAM 13836 / NRRL 3357 / JCM 12722 / SRRC 167), this protein is Methyltransferase afvD.